A 476-amino-acid chain; its full sequence is Glycogen synthase (476 aa).

K15 contacts ADP-alpha-D-glucose.

This sequence belongs to the glycosyltransferase 1 family. Bacterial/plant glycogen synthase subfamily.

It catalyses the reaction [(1-&gt;4)-alpha-D-glucosyl](n) + ADP-alpha-D-glucose = [(1-&gt;4)-alpha-D-glucosyl](n+1) + ADP + H(+). It participates in glycan biosynthesis; glycogen biosynthesis. Its function is as follows. Synthesizes alpha-1,4-glucan chains using ADP-glucose. In Haemophilus influenzae (strain 86-028NP), this protein is Glycogen synthase.